Here is a 177-residue protein sequence, read N- to C-terminus: Anti-apoptotic protein NR13 (177 aa).

The BH1 motif lies at 75 to 94 (LEAEGGLNWGRLLALVVFTG). The chain crosses the membrane as a helical span at residues 86 to 106 (LLALVVFTGTLAAALAESGCE). Positions 126–141 (EWLEEHGGWDGFCRFF) match the BH2 motif. Residues 156-176 (SNAIMAAAGFGIAGLAFLLVV) form a helical membrane-spanning segment.

The protein belongs to the Bcl-2 family. In terms of assembly, interacts with BAX. As to expression, expressed preferentially in heart, skeletal muscle, retina, optical tectum and bursa of Fabricius.

Its subcellular location is the cell membrane. Shows anti-apoptotic properties. Counteract the pro-apoptotic activity of BAX. This is Anti-apoptotic protein NR13 (NR13) from Gallus gallus (Chicken).